The sequence spans 271 residues: Monalysin (271 aa).

Positions 1–33 are excised as a propeptide; sequence MTIKEELGQPQSHSIELDEVSKEAASTRAALTS. The tract at residues 102 to 170 is pore-forming domain; the sequence is IPQNVTTTLS…FTDTTEMKGP (69 aa).

As to quaternary structure, pro-Monalysin forms a stable donut-like 18-mer complex composed of two disk-shaped nonamers held together by N-terminal swapping of the pro-peptides. After proteolytic cleavage, the inactive 18-mer complex probably dissociates into two disk-shaped active nonamers in which the transmembrane segments are unmasked and ready to engage the conformational change leading to the pore formation into the target membrane. Multimerizes into circular-like structures and barrel-like aggregates. In terms of processing, requires N-terminal cleavage to become fully active. The metalloprotease AprA can induce the rapid cleavage of pro-Monalysin into its active form. Can also be processed by trypsin.

The protein resides in the secreted. It is found in the host cell membrane. In terms of biological role, pore-forming toxin that contributes to the virulence of P.entomophila against Drosophila, playing an important role in host intestinal damage and lethality. Displays cytolytic and hemolytic activity. The protein is Monalysin of Pseudomonas entomophila (strain L48).